The chain runs to 74 residues: MSNALASKKKVSKNQVVFFDYRDERKLKRFINDQGKIIPRRITGLSAKEQSLLTHSIKWARFLAIIPYVADEYK.

The protein belongs to the bacterial ribosomal protein bS18 family. In terms of assembly, part of the 30S ribosomal subunit. Forms a tight heterodimer with protein bS6.

Binds as a heterodimer with protein bS6 to the central domain of the 16S rRNA, where it helps stabilize the platform of the 30S subunit. In Chlorobaculum tepidum (strain ATCC 49652 / DSM 12025 / NBRC 103806 / TLS) (Chlorobium tepidum), this protein is Small ribosomal subunit protein bS18.